The sequence spans 124 residues: UPF0102 protein Blon_1698/BLIJ_1758 (124 aa).

It belongs to the UPF0102 family.

This Bifidobacterium longum subsp. infantis (strain ATCC 15697 / DSM 20088 / JCM 1222 / NCTC 11817 / S12) protein is UPF0102 protein Blon_1698/BLIJ_1758.